A 270-amino-acid chain; its full sequence is 3-phenylpropionate-dihydrodiol/cinnamic acid-dihydrodiol dehydrogenase (270 aa).

Residue 10–34 (FITGGGSGLGLALVERFIEEGAQVA) participates in NAD(+) binding. S143 contacts substrate. Y156 acts as the Proton acceptor in catalysis.

It belongs to the short-chain dehydrogenases/reductases (SDR) family.

It carries out the reaction 3-(cis-5,6-dihydroxycyclohexa-1,3-dien-1-yl)propanoate + NAD(+) = 3-(2,3-dihydroxyphenyl)propanoate + NADH + H(+). The catalysed reaction is (2E)-3-(cis-5,6-dihydroxycyclohexa-1,3-dien-1-yl)prop-2-enoate + NAD(+) = (2E)-3-(2,3-dihydroxyphenyl)prop-2-enoate + NADH + H(+). It functions in the pathway aromatic compound metabolism; 3-phenylpropanoate degradation. Converts 3-phenylpropionate-dihydrodiol (PP-dihydrodiol) and cinnamic acid-dihydrodiol (CI-dihydrodiol) into 3-(2,3-dihydroxylphenyl)propanoic acid (DHPP) and 2,3-dihydroxicinnamic acid (DHCI), respectively. The sequence is that of 3-phenylpropionate-dihydrodiol/cinnamic acid-dihydrodiol dehydrogenase from Escherichia coli O17:K52:H18 (strain UMN026 / ExPEC).